A 243-amino-acid polypeptide reads, in one-letter code: Carboxy-S-adenosyl-L-methionine synthase (243 aa).

Residues Tyr40, 65-67 (GCS), 90-91 (DN), 118-119 (DI), Asn133, and Arg200 each bind S-adenosyl-L-methionine.

The protein belongs to the class I-like SAM-binding methyltransferase superfamily. Cx-SAM synthase family. As to quaternary structure, homodimer.

It catalyses the reaction prephenate + S-adenosyl-L-methionine = carboxy-S-adenosyl-L-methionine + 3-phenylpyruvate + H2O. Functionally, catalyzes the conversion of S-adenosyl-L-methionine (SAM) to carboxy-S-adenosyl-L-methionine (Cx-SAM). This Shewanella baltica (strain OS155 / ATCC BAA-1091) protein is Carboxy-S-adenosyl-L-methionine synthase.